The primary structure comprises 302 residues: Cuticle collagen 40 (302 aa).

2 disordered regions span residues 79-103 and 119-302; these read RIKR…GGGG and AGAP…APGY. Over residues 91–103 the composition is skewed to gly residues; the sequence is YAEGGAAAGGGGG. Triple-helical region regions lie at residues 114–143, 162–185, 189–221, 226–252, and 255–290; these read GAAG…AGSD, GPAG…DGNT, GGEG…PGQV, GTPG…AGAS, and GPAG…GGGC. Low complexity predominate over residues 137 to 154; that stretch reads PGTAGSDAEAAAAPTASD. A compositionally biased stretch (pro residues) spans 194–203; it reads AGPPGPPGPA. 2 stretches are compositionally biased toward low complexity: residues 205–234 and 245–281; these read NPGT…AGAA and NPGS…PGEA. A compositionally biased stretch (pro residues) spans 293–302; that stretch reads CPPPRTAPGY.

This sequence belongs to the cuticular collagen family. As to quaternary structure, collagen polypeptide chains are complexed within the cuticle by disulfide bonds and other types of covalent cross-links.

Its function is as follows. Nematode cuticles are composed largely of collagen-like proteins. The cuticle functions both as an exoskeleton and as a barrier to protect the worm from its environment. The sequence is that of Cuticle collagen 40 (col-40) from Caenorhabditis elegans.